Consider the following 311-residue polypeptide: Bifunctional pinoresinol-lariciresinol reductase (311 aa).

Residues 10–16 (GGTGYLG), arginine 35, and lysine 44 each bind NADP(+). The active-site Proton acceptor is lysine 138. Arginine 142 contributes to the NADP(+) binding site. Histidine 270 contributes to the substrate binding site.

This sequence belongs to the NmrA-type oxidoreductase family. Isoflavone reductase subfamily. As to quaternary structure, dimer. Expressed in rhizomes, stems, and leaves.

It catalyses the reaction (-)-secoisolariciresinol + NADP(+) = (+)-lariciresinol + NADPH + H(+). The catalysed reaction is (+)-lariciresinol + NADP(+) = (+)-pinoresinol + NADPH + H(+). It functions in the pathway aromatic compound metabolism; phenylpropanoid biosynthesis. In terms of biological role, reductase involved in lignan biosynthesis. Also involved in the biosynthesis of etoposide, a chemotherapeutic compound of the topoisomerase inhibitor family. Catalyzes the enantioselective sequential conversion of (+)-pinoresinol into (+)-lariciresinol and of (+)-lariciresinol into (-)-secoisolariciresinol. Abstracts the 4R-hydride from the NADPH cofactor during catalysis. In Sinopodophyllum hexandrum (Himalayan may apple), this protein is Bifunctional pinoresinol-lariciresinol reductase.